Here is a 455-residue protein sequence, read N- to C-terminus: MSHGSNPRPATARKSSDLKGTLRIPGDKSISHRSFMFGGLAAGETRITGLLEGEDVINTGKAMQAMGARIRKEGDTWIIDGVGNGALLAPEAPLDFGNAGTGCRLTMGLVGVYDFDSTFIGDASLTKRPMGRVLDPLREMGVQVKSAEGDRLPVTLRGPKTPNPITYRVPMASAQVKSAVLLAGLNTPGITTVVEPVMTRDHTEKMLQGFGANLTVETDAEGVRTIRLEGRGKLTGQVIDVPGDPSSTAFPLVAGLIVPGSDITILNVLMNPTRTGLILTLQEMGANIEVMNKRLAGGEDVADLRVRHSELKGVTVPEDRAPSMIDEYPVLAVAAAFAEGTTVMNGLEELRVKESDRLSAVADGLKLNGVDCDEGEASLVVRGRPGGKGLGKISGGQVKTHLDHRIAMSFLVMGLASEHPVTVDDATMIATSFPEFMGLMTGLGAKIEEAENKAA.

Positions 1–23 are disordered; it reads MSHGSNPRPATARKSSDLKGTLR. Positions 28, 29, and 33 each coordinate 3-phosphoshikimate. Lys28 is a phosphoenolpyruvate binding site. Phosphoenolpyruvate contacts are provided by Gly100 and Arg128. Residues Ser173, Gln175, Asp326, and Lys353 each contribute to the 3-phosphoshikimate site. Gln175 lines the phosphoenolpyruvate pocket. The active-site Proton acceptor is the Asp326. Phosphoenolpyruvate contacts are provided by Arg357 and Arg405.

The protein belongs to the EPSP synthase family. As to quaternary structure, monomer.

It is found in the cytoplasm. The catalysed reaction is 3-phosphoshikimate + phosphoenolpyruvate = 5-O-(1-carboxyvinyl)-3-phosphoshikimate + phosphate. It functions in the pathway metabolic intermediate biosynthesis; chorismate biosynthesis; chorismate from D-erythrose 4-phosphate and phosphoenolpyruvate: step 6/7. Catalyzes the transfer of the enolpyruvyl moiety of phosphoenolpyruvate (PEP) to the 5-hydroxyl of shikimate-3-phosphate (S3P) to produce enolpyruvyl shikimate-3-phosphate and inorganic phosphate. The sequence is that of 3-phosphoshikimate 1-carboxyvinyltransferase from Rhizobium meliloti (strain 1021) (Ensifer meliloti).